The primary structure comprises 389 residues: Na(+)/H(+) antiporter NhaA 1 (389 aa).

Helical transmembrane passes span V12–V32, F62–L82, I97–L117, G128–G148, I157–F177, I184–G204, I220–I240, F260–S280, I282–G302, A305–G325, L331–L351, and L365–F385.

It belongs to the NhaA Na(+)/H(+) (TC 2.A.33) antiporter family.

Its subcellular location is the cell inner membrane. The enzyme catalyses Na(+)(in) + 2 H(+)(out) = Na(+)(out) + 2 H(+)(in). Its function is as follows. Na(+)/H(+) antiporter that extrudes sodium in exchange for external protons. This chain is Na(+)/H(+) antiporter NhaA 1, found in Campylobacter jejuni subsp. jejuni serotype O:23/36 (strain 81-176).